Here is a 61-residue protein sequence, read N- to C-terminus: Large ribosomal subunit protein uL30 (61 aa).

The protein belongs to the universal ribosomal protein uL30 family. As to quaternary structure, part of the 50S ribosomal subunit.

This Thermobifida fusca (strain YX) protein is Large ribosomal subunit protein uL30.